We begin with the raw amino-acid sequence, 268 residues long: tRNA (guanine-N(1)-)-methyltransferase (268 aa).

Residues Gly-110 and 129-134 (IGDFVM) contribute to the S-adenosyl-L-methionine site. Residues 246–268 (WGAPPAPVKRHRKRRPETTESAS) are disordered.

Belongs to the RNA methyltransferase TrmD family. In terms of assembly, homodimer.

It localises to the cytoplasm. It catalyses the reaction guanosine(37) in tRNA + S-adenosyl-L-methionine = N(1)-methylguanosine(37) in tRNA + S-adenosyl-L-homocysteine + H(+). Functionally, specifically methylates guanosine-37 in various tRNAs. This chain is tRNA (guanine-N(1)-)-methyltransferase, found in Deinococcus deserti (strain DSM 17065 / CIP 109153 / LMG 22923 / VCD115).